Consider the following 899-residue polypeptide: Tuberous sclerosis 1 protein homolog (899 aa).

Coiled-coil stretches lie at residues 540–706 (LSST…CVNI) and 737–847 (SDEQ…ELKN). Residues 874-899 (NDSLHPKVGPPRRQSTDTSRSTFRQY) are disordered. The span at 889–899 (TDTSRSTFRQY) shows a compositional bias: polar residues.

As to quaternary structure, interacts with tsc2.

It localises to the cytoplasm. In terms of biological role, together with tsc2, required for uptake of various amino acids from the environment and for proper conjugation. Involved in induction of gene expression of permeases and genes required for meiosis upon nitrogen starvation. May act as a GTPase-activating protein (GAP) for the small GTPase rhb1. The protein is Tuberous sclerosis 1 protein homolog (tsc1) of Schizosaccharomyces pombe (strain 972 / ATCC 24843) (Fission yeast).